The chain runs to 442 residues: 26S proteasome regulatory subunit 6A (442 aa).

Position 12 is a phosphoserine (Ser12). 230–237 (GPPGTGKT) provides a ligand contact to ATP. Ser379 bears the Phosphoserine mark.

The protein belongs to the AAA ATPase family. Component of the 19S proteasome regulatory particle complex. The 26S proteasome consists of a 20S core particle (CP) and two 19S regulatory subunits (RP). The regulatory particle is made of a lid composed of 9 subunits, a base containing 6 ATPases including PSMC3 and few additional components. Interacts with PAAF1.

Its subcellular location is the cytoplasm. The protein localises to the nucleus. Component of the 26S proteasome, a multiprotein complex involved in the ATP-dependent degradation of ubiquitinated proteins. This complex plays a key role in the maintenance of protein homeostasis by removing misfolded or damaged proteins, which could impair cellular functions, and by removing proteins whose functions are no longer required. Therefore, the proteasome participates in numerous cellular processes, including cell cycle progression, apoptosis, or DNA damage repair. PSMC3 belongs to the heterohexameric ring of AAA (ATPases associated with diverse cellular activities) proteins that unfolds ubiquitinated target proteins that are concurrently translocated into a proteolytic chamber and degraded into peptides. This is 26S proteasome regulatory subunit 6A (Psmc3) from Mus musculus (Mouse).